We begin with the raw amino-acid sequence, 438 residues long: Trigger factor (438 aa).

The region spanning 160–245 is the PPIase FKBP-type domain; the sequence is DDKVTIDFVG…VKKIQQAELP (86 aa).

The protein belongs to the FKBP-type PPIase family. Tig subfamily.

The protein resides in the cytoplasm. The catalysed reaction is [protein]-peptidylproline (omega=180) = [protein]-peptidylproline (omega=0). Functionally, involved in protein export. Acts as a chaperone by maintaining the newly synthesized protein in an open conformation. Functions as a peptidyl-prolyl cis-trans isomerase. The polypeptide is Trigger factor (Francisella tularensis subsp. mediasiatica (strain FSC147)).